The chain runs to 117 residues: Ribonuclease P protein component (117 aa).

This sequence belongs to the RnpA family. As to quaternary structure, consists of a catalytic RNA component (M1 or rnpB) and a protein subunit.

The enzyme catalyses Endonucleolytic cleavage of RNA, removing 5'-extranucleotides from tRNA precursor.. Functionally, RNaseP catalyzes the removal of the 5'-leader sequence from pre-tRNA to produce the mature 5'-terminus. It can also cleave other RNA substrates such as 4.5S RNA. The protein component plays an auxiliary but essential role in vivo by binding to the 5'-leader sequence and broadening the substrate specificity of the ribozyme. The chain is Ribonuclease P protein component from Thermotoga petrophila (strain ATCC BAA-488 / DSM 13995 / JCM 10881 / RKU-1).